The primary structure comprises 159 residues: Ecotin (159 aa).

The signal sequence occupies residues 1–22; sequence MRPTPMTAILALTLAAAAPAMA. A disulfide bond links C68 and C105.

This sequence belongs to the protease inhibitor I11 (ecotin) family. Homodimer.

It localises to the periplasm. Functionally, general inhibitor of family S1 serine proteases. This is Ecotin from Pseudomonas putida (strain GB-1).